The chain runs to 494 residues: MAGEGGELTAALLKKTTENGGEENDELGLKEKVWIESKKLWVVAAPSIFTKFSTYGVSLVTQGFVGHIGPTELAAYSITFTVLLRFSNGILLGMASALGTLCGQAYGAKQYHMLGIHLQRSWIVLTGCTICIMPIFIFSGPILLALGQEDHIVRVARVIALWLIAINFTFVPAFTCQIFLQSQSKNKIIAYVSAVTLGLHVFFSWLLVVHFNFGITGAMTSTLVAFWMPNIVQLLYVTSGGCKDTWRGFTMLAFKDLWPVFKLSLSSGGMVCLELWYNSILVLLTGNLKNAEVAIDALAICINVNALQMMIALGFLAAVSVRVSNELGRGNPEGAKFATIVAVFTSLSIGLVLFFVFLFLRGRISYIFTTSEAVAAEVADLSPLLAFSILLNSVQPVLSGVAVGAGWQGYVAYINLACYYLLGIPVGLVLGYVVGLQVKGVWIGMLFGIFVQTCVLTIMTLRTDWDQQVSTSLKNINRWVVPESRDANQISSEE.

The next 12 helical transmembrane spans lie at 40–60 (LWVV…VSLV), 78–98 (ITFT…ASAL), 123–143 (IVLT…GPIL), 159–179 (IALW…CQIF), 188–208 (IIAY…WLLV), 217–237 (GAMT…LLYV), 268–288 (GGMV…TGNL), 299–319 (AICI…LAAV), 340–360 (IVAV…FLFL), 384–404 (LLAF…VAVG), 416–436 (LACY…VVGL), and 441–461 (VWIG…IMTL).

It belongs to the multi antimicrobial extrusion (MATE) (TC 2.A.66.1) family.

The protein resides in the membrane. The polypeptide is Protein DETOXIFICATION 22 (Arabidopsis thaliana (Mouse-ear cress)).